A 761-amino-acid polypeptide reads, in one-letter code: Prolyl oligopeptidase A (761 aa).

Active-site charge relay system residues include serine 606, aspartate 690, and histidine 726.

It belongs to the peptidase S9A family. In terms of assembly, monomer.

The catalysed reaction is Hydrolysis of Pro-|-Xaa &gt;&gt; Ala-|-Xaa in oligopeptides.. Housekeeping prolyl oligopeptidase (POP) that behaves like a conventional POP by cleaving peptide bonds on the C-terminal side of prolyl residues within peptides that are up to approximately 30 amino acids long. This Amanita bisporigera (Destroying angel) protein is Prolyl oligopeptidase A.